The chain runs to 175 residues: Movement protein (175 aa).

A homodimerization region spans residues Ala30 to Leu47. The segment at Glu50–Gly156 is RNA-binding. Disordered stretches follow at residues Phe58–Ser89 and Ser103–Arg175. The span at Ile63–Ser74 shows a compositional bias: basic and acidic residues. Ser64 and Ser133 each carry phosphoserine. 2 stretches are compositionally biased toward polar residues: residues Pro115–Pro141 and Arg148–Lys169.

It belongs to the polerovirus movement protein family. Homodimer. Phosphorylated.

It is found in the host cell junction. It localises to the host plasmodesma. The protein localises to the host Golgi apparatus. Functionally, together with movement protein P3a, facilitates long-distance movement of virions in host. Transports viral genome to neighboring plant cells directly through plasmosdesmata, without any budding. The movement protein allows efficient cell to cell propagation, by bypassing the host cell wall barrier. Binds ssRNA. This is Movement protein from Beta vulgaris (Sugar beet).